A 208-amino-acid polypeptide reads, in one-letter code: Glycerol-3-phosphate acyltransferase 1 (208 aa).

The next 5 membrane-spanning stretches (helical) occupy residues 52–72 (VVLM…YLLI), 77–97 (WVIL…WLDF), 112–132 (FLLP…LVFI), 140–160 (IALA…YGSH), and 161–181 (SEFA…KFVL).

This sequence belongs to the PlsY family. Probably interacts with PlsX.

Its subcellular location is the cell membrane. It carries out the reaction an acyl phosphate + sn-glycerol 3-phosphate = a 1-acyl-sn-glycero-3-phosphate + phosphate. It functions in the pathway lipid metabolism; phospholipid metabolism. Catalyzes the transfer of an acyl group from acyl-phosphate (acyl-PO(4)) to glycerol-3-phosphate (G3P) to form lysophosphatidic acid (LPA). This enzyme utilizes acyl-phosphate as fatty acyl donor, but not acyl-CoA or acyl-ACP. This is Glycerol-3-phosphate acyltransferase 1 from Dehalococcoides mccartyi (strain ATCC BAA-2266 / KCTC 15142 / 195) (Dehalococcoides ethenogenes (strain 195)).